Consider the following 255-residue polypeptide: Ribonuclease HII (255 aa).

Positions aspartate 70–lysine 255 constitute an RNase H type-2 domain. A divalent metal cation-binding residues include aspartate 76, glutamate 77, and aspartate 168.

This sequence belongs to the RNase HII family. Mn(2+) serves as cofactor. Requires Mg(2+) as cofactor.

The protein localises to the cytoplasm. The catalysed reaction is Endonucleolytic cleavage to 5'-phosphomonoester.. Its function is as follows. Endonuclease that specifically degrades the RNA of RNA-DNA hybrids. This chain is Ribonuclease HII, found in Pediococcus pentosaceus (strain ATCC 25745 / CCUG 21536 / LMG 10740 / 183-1w).